The chain runs to 143 residues: Succinate dehydrogenase assembly factor 2, mitochondrial (143 aa).

It belongs to the SDHAF2 family. In terms of assembly, interacts with the flavoprotein subunit within the SDH catalytic dimer.

It localises to the mitochondrion matrix. Functionally, plays an essential role in the assembly of succinate dehydrogenase (SDH), an enzyme complex (also referred to as respiratory complex II) that is a component of both the tricarboxylic acid (TCA) cycle and the mitochondrial electron transport chain, and which couples the oxidation of succinate to fumarate with the reduction of ubiquinone (coenzyme Q) to ubiquinol. Required for flavinylation (covalent attachment of FAD) of the flavoprotein subunit of the SDH catalytic dimer. The protein is Succinate dehydrogenase assembly factor 2, mitochondrial of Schizosaccharomyces japonicus (strain yFS275 / FY16936) (Fission yeast).